A 169-amino-acid chain; its full sequence is MFDIGFLELAVIAVIGLIVIGPERLPEAVRSGATWMAKIRKMMRDTRAEIEVQIGADEIRRELHNEQVMKSLEALKVTKDDIQQHILDADRKMMLEQEAEEAKLQTPVSRRVAGDDPTLGTDDNVFTDPSYAHPPEEPSKVEADTSAETPQANNQDQQPTTKTEPANDR.

A helical membrane pass occupies residues 1–21 (MFDIGFLELAVIAVIGLIVIG). The segment at 98–169 (EAEEAKLQTP…TTKTEPANDR (72 aa)) is disordered. Residues 134–143 (PPEEPSKVEA) show a composition bias toward basic and acidic residues. A compositionally biased stretch (polar residues) spans 146 to 169 (SAETPQANNQDQQPTTKTEPANDR).

This sequence belongs to the TatB family. As to quaternary structure, the Tat system comprises two distinct complexes: a TatABC complex, containing multiple copies of TatA, TatB and TatC subunits, and a separate TatA complex, containing only TatA subunits. Substrates initially bind to the TatABC complex, which probably triggers association of the separate TatA complex to form the active translocon.

Its subcellular location is the cell inner membrane. Functionally, part of the twin-arginine translocation (Tat) system that transports large folded proteins containing a characteristic twin-arginine motif in their signal peptide across membranes. Together with TatC, TatB is part of a receptor directly interacting with Tat signal peptides. TatB may form an oligomeric binding site that transiently accommodates folded Tat precursor proteins before their translocation. In Saccharophagus degradans (strain 2-40 / ATCC 43961 / DSM 17024), this protein is Sec-independent protein translocase protein TatB.